We begin with the raw amino-acid sequence, 939 residues long: Valine--tRNA ligase (939 aa).

The 'HIGH' region motif lies at 45–55; it reads PNVTGTLHMGH. A 'KMSKS' region motif is present at residues 549–553; sequence KMSKS. Residue Lys552 participates in ATP binding. Positions 876–939 form a coiled coil; the sequence is AAETARLRKE…KIRVQLVKLA (64 aa).

It belongs to the class-I aminoacyl-tRNA synthetase family. ValS type 1 subfamily. Monomer.

It is found in the cytoplasm. The catalysed reaction is tRNA(Val) + L-valine + ATP = L-valyl-tRNA(Val) + AMP + diphosphate. Its function is as follows. Catalyzes the attachment of valine to tRNA(Val). As ValRS can inadvertently accommodate and process structurally similar amino acids such as threonine, to avoid such errors, it has a 'posttransfer' editing activity that hydrolyzes mischarged Thr-tRNA(Val) in a tRNA-dependent manner. The polypeptide is Valine--tRNA ligase (Chromobacterium violaceum (strain ATCC 12472 / DSM 30191 / JCM 1249 / CCUG 213 / NBRC 12614 / NCIMB 9131 / NCTC 9757 / MK)).